A 335-amino-acid polypeptide reads, in one-letter code: Selenide, water dikinase (335 aa).

U7 is an active-site residue. Position 7 (U7) is a non-standard amino acid, selenocysteine. ATP-binding positions include K10 and 36-38 (LGD). Mg(2+) is bound at residue D39. Residues D55, D78, and 126-128 (GHT) contribute to the ATP site. Mg(2+) is bound at residue D78. D232 contacts Mg(2+).

It belongs to the selenophosphate synthase 1 family. Class I subfamily. In terms of assembly, homodimer. Requires Mg(2+) as cofactor.

It catalyses the reaction hydrogenselenide + ATP + H2O = selenophosphate + AMP + phosphate + 2 H(+). Synthesizes selenophosphate from selenide and ATP. This chain is Selenide, water dikinase, found in Methanococcus maripaludis (strain DSM 14266 / JCM 13030 / NBRC 101832 / S2 / LL).